Consider the following 702-residue polypeptide: Polyribonucleotide nucleotidyltransferase 1 (702 aa).

D483 and D489 together coordinate Mg(2+). The region spanning 550 to 609 is the KH domain; that stretch reads PQVTKLKVHPDKVREVIGAGGKVINKIIDETGVKINIENDGTIYIAAPDQESARVALEMI. Residues 619–687 form the S1 motif domain; it reads GEVYTGKVIK…PQGKIGLSRK (69 aa).

This sequence belongs to the polyribonucleotide nucleotidyltransferase family. It depends on Mg(2+) as a cofactor.

The protein localises to the cytoplasm. It carries out the reaction RNA(n+1) + phosphate = RNA(n) + a ribonucleoside 5'-diphosphate. Its function is as follows. Involved in mRNA degradation. Catalyzes the phosphorolysis of single-stranded polyribonucleotides processively in the 3'- to 5'-direction. The sequence is that of Polyribonucleotide nucleotidyltransferase 1 from Alkaliphilus metalliredigens (strain QYMF).